The primary structure comprises 345 residues: S-adenosylmethionine:tRNA ribosyltransferase-isomerase (345 aa).

It belongs to the QueA family. In terms of assembly, monomer.

The protein resides in the cytoplasm. It carries out the reaction 7-aminomethyl-7-carbaguanosine(34) in tRNA + S-adenosyl-L-methionine = epoxyqueuosine(34) in tRNA + adenine + L-methionine + 2 H(+). Its pathway is tRNA modification; tRNA-queuosine biosynthesis. Transfers and isomerizes the ribose moiety from AdoMet to the 7-aminomethyl group of 7-deazaguanine (preQ1-tRNA) to give epoxyqueuosine (oQ-tRNA). The protein is S-adenosylmethionine:tRNA ribosyltransferase-isomerase of Thermus thermophilus (strain ATCC BAA-163 / DSM 7039 / HB27).